The chain runs to 107 residues: QIVLTQSPAIMSASPGQKVTMTCSASSSVSYMHWYQQKSGTSPKRWIYDTSKLASGVPARFSGSGSATSYSLTITSMQAEDAATYYCQQWSSNPLTFGAGTKLELKR.

The segment at 1–23 (QIVLTQSPAIMSASPGQKVTMTC) is framework-1. The cysteines at positions 23 and 87 are disulfide-linked. Positions 24-33 (SASSSVSYMH) are complementarity-determining-1. The tract at residues 34–48 (WYQQKSGTSPKRWIY) is framework-2. The segment at 49-55 (DTSKLAS) is complementarity-determining-2. The interval 56–87 (GVPARFSGSGSATSYSLTITSMQAEDAATYYC) is framework-3. The tract at residues 88 to 96 (QQWSSNPLT) is complementarity-determining-3. The segment at 97 to 106 (FGAGTKLELK) is framework-4.

Functionally, anti-2-phenyl oxazolone (PHOX) Antibody. This Mus musculus (Mouse) protein is Ig kappa chain V-VI region NQ2-17.4.1.